The chain runs to 240 residues: UDP-2,3-diacylglucosamine hydrolase (240 aa).

5 residues coordinate Mn(2+): aspartate 8, histidine 10, aspartate 41, asparagine 79, and histidine 114. Asparagine 79 to arginine 80 serves as a coordination point for substrate. Residues aspartate 122, serine 160, threonine 164, lysine 167, and histidine 195 each coordinate substrate. Positions 195 and 197 each coordinate Mn(2+).

It belongs to the LpxH family. Requires Mn(2+) as cofactor.

It is found in the cell inner membrane. The catalysed reaction is UDP-2-N,3-O-bis[(3R)-3-hydroxytetradecanoyl]-alpha-D-glucosamine + H2O = 2-N,3-O-bis[(3R)-3-hydroxytetradecanoyl]-alpha-D-glucosaminyl 1-phosphate + UMP + 2 H(+). The protein operates within glycolipid biosynthesis; lipid IV(A) biosynthesis; lipid IV(A) from (3R)-3-hydroxytetradecanoyl-[acyl-carrier-protein] and UDP-N-acetyl-alpha-D-glucosamine: step 4/6. In terms of biological role, hydrolyzes the pyrophosphate bond of UDP-2,3-diacylglucosamine to yield 2,3-diacylglucosamine 1-phosphate (lipid X) and UMP by catalyzing the attack of water at the alpha-P atom. Involved in the biosynthesis of lipid A, a phosphorylated glycolipid that anchors the lipopolysaccharide to the outer membrane of the cell. The protein is UDP-2,3-diacylglucosamine hydrolase of Pseudomonas aeruginosa (strain UCBPP-PA14).